Consider the following 294-residue polypeptide: Diaminopimelate epimerase (294 aa).

The substrate site is built by Asn15, Gln47, and Asn67. Cys76 acts as the Proton donor in catalysis. Residues 77 to 78, Asn163, Asn197, and 215 to 216 each bind substrate; these read GN and ER. Cys224 functions as the Proton acceptor in the catalytic mechanism. 225–226 serves as a coordination point for substrate; that stretch reads GS.

The protein belongs to the diaminopimelate epimerase family. As to quaternary structure, homodimer.

It localises to the cytoplasm. The catalysed reaction is (2S,6S)-2,6-diaminopimelate = meso-2,6-diaminopimelate. The protein operates within amino-acid biosynthesis; L-lysine biosynthesis via DAP pathway; DL-2,6-diaminopimelate from LL-2,6-diaminopimelate: step 1/1. In terms of biological role, catalyzes the stereoinversion of LL-2,6-diaminopimelate (L,L-DAP) to meso-diaminopimelate (meso-DAP), a precursor of L-lysine and an essential component of the bacterial peptidoglycan. This Mesorhizobium japonicum (strain LMG 29417 / CECT 9101 / MAFF 303099) (Mesorhizobium loti (strain MAFF 303099)) protein is Diaminopimelate epimerase.